The following is an 886-amino-acid chain: Phosphatidylinositol 3-kinase catalytic subunit type 3 (886 aa).

Residues 35-184 (YKAVLEDPML…LAKLTKAHRQ (150 aa)) form the C2 PI3K-type domain. In terms of domain architecture, PIK helical spans 283-519 (DHDLKPNAAT…PKTHEMYLNV (237 aa)). The disordered stretch occupies residues 414 to 464 (GLEPTKKDSQGPMLESMTTSGINPETDSSQILSNPLPAVSSPAPPSKTKDG). Residues 429-444 (SMTTSGINPETDSSQI) show a composition bias toward polar residues. Residues 445–454 (LSNPLPAVSS) show a composition bias toward low complexity. A PI3K/PI4K catalytic domain is found at 604–870 (IPEKATLFKS…LIDDSVNALF (267 aa)). A G-loop region spans residues 610–616 (LFKSALM). The segment at 739–747 (GVGDRHLDN) is catalytic loop. Residues 758-779 (HIDFGYILGRDPKPLPPPMKLN) are activation loop.

Belongs to the PI3/PI4-kinase family. Component of the PI3K (PI3KC3/PI3K-III/class III phosphatidylinositol 3-kinase) complex the core of which is composed of the catalytic subunit pik3c3, the regulatory subunit pik3r4 and becn1 associating with additional regulatory/auxiliary subunits to form alternative complex forms. Mn(2+) is required as a cofactor.

It localises to the midbody. It catalyses the reaction a 1,2-diacyl-sn-glycero-3-phospho-(1D-myo-inositol) + ATP = a 1,2-diacyl-sn-glycero-3-phospho-(1D-myo-inositol-3-phosphate) + ADP + H(+). In terms of biological role, catalytic subunit of the PI3K complex that mediates formation of phosphatidylinositol 3-phosphate; different complex forms are believed to play a role in multiple membrane trafficking pathways. Involved in the transport of lysosomal enzyme precursors to lysosomes. Required for transport from early to late endosomes. This chain is Phosphatidylinositol 3-kinase catalytic subunit type 3 (pik3c3), found in Xenopus laevis (African clawed frog).